We begin with the raw amino-acid sequence, 374 residues long: UDP-N-acetylglucosamine--N-acetylmuramyl-(pentapeptide) pyrophosphoryl-undecaprenol N-acetylglucosamine transferase (374 aa).

Residues 13-15 (TGG), N124, R165, S193, and Q294 contribute to the UDP-N-acetyl-alpha-D-glucosamine site.

The protein belongs to the glycosyltransferase 28 family. MurG subfamily.

It localises to the cell inner membrane. It carries out the reaction di-trans,octa-cis-undecaprenyl diphospho-N-acetyl-alpha-D-muramoyl-L-alanyl-D-glutamyl-meso-2,6-diaminopimeloyl-D-alanyl-D-alanine + UDP-N-acetyl-alpha-D-glucosamine = di-trans,octa-cis-undecaprenyl diphospho-[N-acetyl-alpha-D-glucosaminyl-(1-&gt;4)]-N-acetyl-alpha-D-muramoyl-L-alanyl-D-glutamyl-meso-2,6-diaminopimeloyl-D-alanyl-D-alanine + UDP + H(+). Its pathway is cell wall biogenesis; peptidoglycan biosynthesis. Functionally, cell wall formation. Catalyzes the transfer of a GlcNAc subunit on undecaprenyl-pyrophosphoryl-MurNAc-pentapeptide (lipid intermediate I) to form undecaprenyl-pyrophosphoryl-MurNAc-(pentapeptide)GlcNAc (lipid intermediate II). The protein is UDP-N-acetylglucosamine--N-acetylmuramyl-(pentapeptide) pyrophosphoryl-undecaprenol N-acetylglucosamine transferase of Rhizobium meliloti (strain 1021) (Ensifer meliloti).